A 209-amino-acid chain; its full sequence is Uracil phosphoribosyltransferase (209 aa).

Residues Arg-79, Arg-104, and 131–139 each bind 5-phospho-alpha-D-ribose 1-diphosphate; that span reads DPMLATGVS. Residues Ile-194 and 199 to 201 contribute to the uracil site; that span reads GDA. Asp-200 is a binding site for 5-phospho-alpha-D-ribose 1-diphosphate.

Belongs to the UPRTase family. It depends on Mg(2+) as a cofactor.

It catalyses the reaction UMP + diphosphate = 5-phospho-alpha-D-ribose 1-diphosphate + uracil. Its pathway is pyrimidine metabolism; UMP biosynthesis via salvage pathway; UMP from uracil: step 1/1. With respect to regulation, allosterically activated by GTP. Its function is as follows. Catalyzes the conversion of uracil and 5-phospho-alpha-D-ribose 1-diphosphate (PRPP) to UMP and diphosphate. In Thermotoga petrophila (strain ATCC BAA-488 / DSM 13995 / JCM 10881 / RKU-1), this protein is Uracil phosphoribosyltransferase.